A 463-amino-acid polypeptide reads, in one-letter code: Cysteine--tRNA ligase (463 aa).

Residue C29 coordinates Zn(2+). Residues 31–41 (PTVYDFAHIGN) carry the 'HIGH' region motif. Zn(2+) contacts are provided by C227, H252, and E256. Residues 285–289 (KMSKS) carry the 'KMSKS' region motif. Residue K288 coordinates ATP.

Belongs to the class-I aminoacyl-tRNA synthetase family. Monomer. It depends on Zn(2+) as a cofactor.

The protein localises to the cytoplasm. It catalyses the reaction tRNA(Cys) + L-cysteine + ATP = L-cysteinyl-tRNA(Cys) + AMP + diphosphate. This Rhodopseudomonas palustris (strain ATCC BAA-98 / CGA009) protein is Cysteine--tRNA ligase.